Here is a 237-residue protein sequence, read N- to C-terminus: Probable transcriptional regulatory protein WS1016 (237 aa).

This sequence belongs to the TACO1 family.

It is found in the cytoplasm. In Wolinella succinogenes (strain ATCC 29543 / DSM 1740 / CCUG 13145 / JCM 31913 / LMG 7466 / NCTC 11488 / FDC 602W) (Vibrio succinogenes), this protein is Probable transcriptional regulatory protein WS1016.